The chain runs to 484 residues: Bifunctional protein GlmU (484 aa).

Positions 1–240 (MSNPHSSAVI…HRELAGVNDR (240 aa)) are pyrophosphorylase. Residues 12–15 (LAAG), K26, Q83, and 88–89 (GT) each bind UDP-N-acetyl-alpha-D-glucosamine. D113 lines the Mg(2+) pocket. G150, E165, N180, and N238 together coordinate UDP-N-acetyl-alpha-D-glucosamine. Mg(2+) is bound at residue N238. The tract at residues 241–261 (VQLAQAGKILNQRLVEDAMRN) is linker. The segment at 262–484 (GATIVDPDTT…QAHAHETKEG (223 aa)) is N-acetyltransferase. R343 and K361 together coordinate UDP-N-acetyl-alpha-D-glucosamine. The active-site Proton acceptor is the H373. Y376 and N387 together coordinate UDP-N-acetyl-alpha-D-glucosamine. Acetyl-CoA is bound by residues A390, 396 to 397 (NY), S415, and A433. Residues 461 to 484 (EKNRPGTPAADAARQAHAHETKEG) form a disordered region.

It in the N-terminal section; belongs to the N-acetylglucosamine-1-phosphate uridyltransferase family. In the C-terminal section; belongs to the transferase hexapeptide repeat family. As to quaternary structure, homotrimer. The cofactor is Mg(2+).

The protein resides in the cytoplasm. It catalyses the reaction alpha-D-glucosamine 1-phosphate + acetyl-CoA = N-acetyl-alpha-D-glucosamine 1-phosphate + CoA + H(+). The catalysed reaction is N-acetyl-alpha-D-glucosamine 1-phosphate + UTP + H(+) = UDP-N-acetyl-alpha-D-glucosamine + diphosphate. The protein operates within nucleotide-sugar biosynthesis; UDP-N-acetyl-alpha-D-glucosamine biosynthesis; N-acetyl-alpha-D-glucosamine 1-phosphate from alpha-D-glucosamine 6-phosphate (route II): step 2/2. Its pathway is nucleotide-sugar biosynthesis; UDP-N-acetyl-alpha-D-glucosamine biosynthesis; UDP-N-acetyl-alpha-D-glucosamine from N-acetyl-alpha-D-glucosamine 1-phosphate: step 1/1. It functions in the pathway bacterial outer membrane biogenesis; LPS lipid A biosynthesis. Its function is as follows. Catalyzes the last two sequential reactions in the de novo biosynthetic pathway for UDP-N-acetylglucosamine (UDP-GlcNAc). The C-terminal domain catalyzes the transfer of acetyl group from acetyl coenzyme A to glucosamine-1-phosphate (GlcN-1-P) to produce N-acetylglucosamine-1-phosphate (GlcNAc-1-P), which is converted into UDP-GlcNAc by the transfer of uridine 5-monophosphate (from uridine 5-triphosphate), a reaction catalyzed by the N-terminal domain. This is Bifunctional protein GlmU from Corynebacterium diphtheriae (strain ATCC 700971 / NCTC 13129 / Biotype gravis).